A 3574-amino-acid chain; its full sequence is Chromatin structure-remodeling complex protein SYD (3574 aa).

Disordered regions lie at residues 76–105 (SCLP…GVSN), 123–211 (TSGR…KIDD), and 328–372 (DPKG…TERS). Composition is skewed to polar residues over residues 124–148 (SGRQ…QSNR) and 155–168 (PSNL…SQPH). The segment covering 169–181 (NRSETMNQRDVKS) has biased composition (basic and acidic residues). The span at 194 to 204 (WDQNMDNSQIF) shows a compositional bias: polar residues. Positions 358–372 (RLDEMDFSSKETERS) are enriched in basic and acidic residues. The HSA domain maps to 573 to 647 (QKMKEERQRR…QREKINLLKI (75 aa)). In terms of domain architecture, Helicase ATP-binding spans 766-933 (VSLYNNHLNG…WALLNFLLPN (168 aa)). Residue 779–786 (DEMGLGKT) coordinates ATP. The DEAH box motif lies at 884-887 (DEGH). A Helicase C-terminal domain is found at 1077–1223 (MLDRMLPKLK…KLGVANQSIT (147 aa)). The Nuclear localization signal signature appears at 1266-1273 (ARRESEID). Disordered regions lie at residues 1342–1472 (KRKD…VSRT), 1500–1575 (HPTS…SDAE), 1588–1637 (IVSR…SGSH), 1690–1811 (GPVQ…QIEV), 1830–1868 (QPHF…QTAD), 2040–2068 (SSLS…LEKN), 2089–2115 (SSEE…TDEV), 2143–2162 (SSML…HSSI), 2179–2220 (LDDK…QMED), 2235–2338 (EEKE…DTND), 2350–2451 (EEKE…HMED), 2517–2538 (FESE…EVSE), 2684–2703 (SEEI…QPDD), 2718–2759 (IDIG…RDSR), 2865–2884 (DTEK…LHQL), 3017–3045 (EGTD…PSSS), 3189–3208 (NADS…VVEK), 3316–3337 (VDDS…AEPM), and 3512–3574 (TEDT…NEDV). Positions 1362 to 1371 (AREVRSYEEK) are enriched in basic and acidic residues. 2 stretches are compositionally biased toward polar residues: residues 1399–1426 (SLAN…QAIT) and 1500–1511 (HPTSSLALTSPD). Residues 1532 to 1546 (GRGRGRSRGRGAGRG) show a composition bias toward basic residues. 2 stretches are compositionally biased toward polar residues: residues 1555 to 1571 (GSNS…TSLA) and 1597 to 1614 (EGST…SATT). Basic and acidic residues predominate over residues 1617-1627 (RSDKAADKDLD). 6 stretches are compositionally biased toward polar residues: residues 1690–1699 (GPVQNQNAVS), 1706–1752 (KSPS…STVE), 1796–1806 (DASSARSTGLT), 1832–1849 (HFSQ…SLSQ), 2040–2057 (SSLS…STTA), and 2090–2110 (SEEQ…LQAS). The span at 2248-2260 (DDADTEQDPEESV) shows a compositional bias: acidic residues. Basic and acidic residues predominate over residues 2438–2451 (DRPKDGTADTHMED). The segment covering 2718 to 2735 (IDIGITSGKTCQPSSSTQ) has biased composition (polar residues). Composition is skewed to polar residues over residues 3034 to 3045 (KSQLADTEPSSS) and 3191 to 3204 (DSQL…SSPS). The span at 3523–3538 (KTEEKDAENPSDRLDG) shows a compositional bias: basic and acidic residues.

Belongs to the SNF2/RAD54 helicase family. As to quaternary structure, interacts with LFY. Binds to BARD1/ROW1. Phosphorylated. As to expression, mostly expressed in rapidly dividing cells in the vegetative, inflorescence, and root meristems, as well as in young leaf and flower primordia. Isoform 1 is predominantly found in seedlings whereas isoform 2 is present in both seedlings and inflorescences (at protein level).

It localises to the cytoplasm. The protein localises to the nucleus. Catalytic component of the chromatin structure-remodeling complex (RSC), which is involved in transcription regulation and nucleosome positioning. Controls stem cell fate via the transcription regulation of WUS in the shoot apical meristem, by modulating its promoter. LFY-dependent repressor of the meristem identity switch from vegetative to reproductive development probably by modulating chromatin state. Involved in the regulation of floral homeotic gene expression in response to environmental stimuli. Required for carpel and ovule development, and for cotyledon separation via the regulation of CUC2 transcription. Regulates the promoters of several genes downstream of the jasmonate (JA) and ethylene (ET) signaling pathways. Required for resistance against the necrotrophic pathogen B.cinerea but not the biotrophic pathogen P.syringae. The polypeptide is Chromatin structure-remodeling complex protein SYD (SYD) (Arabidopsis thaliana (Mouse-ear cress)).